A 562-amino-acid chain; its full sequence is Dihydroxy-acid dehydratase (562 aa).

Cys55 serves as a coordination point for [2Fe-2S] cluster. Asp87 is a binding site for Mg(2+). A [2Fe-2S] cluster-binding site is contributed by Cys128. The Mg(2+) site is built by Asp129 and Lys130. Lys130 is subject to N6-carboxylysine. Residue Cys200 coordinates [2Fe-2S] cluster. Glu451 is a binding site for Mg(2+). Ser477 functions as the Proton acceptor in the catalytic mechanism.

Belongs to the IlvD/Edd family. Homodimer. The cofactor is [2Fe-2S] cluster. It depends on Mg(2+) as a cofactor.

It carries out the reaction (2R)-2,3-dihydroxy-3-methylbutanoate = 3-methyl-2-oxobutanoate + H2O. It catalyses the reaction (2R,3R)-2,3-dihydroxy-3-methylpentanoate = (S)-3-methyl-2-oxopentanoate + H2O. Its pathway is amino-acid biosynthesis; L-isoleucine biosynthesis; L-isoleucine from 2-oxobutanoate: step 3/4. It participates in amino-acid biosynthesis; L-valine biosynthesis; L-valine from pyruvate: step 3/4. Functions in the biosynthesis of branched-chain amino acids. Catalyzes the dehydration of (2R,3R)-2,3-dihydroxy-3-methylpentanoate (2,3-dihydroxy-3-methylvalerate) into 2-oxo-3-methylpentanoate (2-oxo-3-methylvalerate) and of (2R)-2,3-dihydroxy-3-methylbutanoate (2,3-dihydroxyisovalerate) into 2-oxo-3-methylbutanoate (2-oxoisovalerate), the penultimate precursor to L-isoleucine and L-valine, respectively. This Cytophaga hutchinsonii (strain ATCC 33406 / DSM 1761 / CIP 103989 / NBRC 15051 / NCIMB 9469 / D465) protein is Dihydroxy-acid dehydratase.